We begin with the raw amino-acid sequence, 401 residues long: Protein-glutamate methylesterase/protein-glutamine glutaminase (401 aa).

The region spanning 16-134 is the Response regulatory domain; the sequence is RVLVIDDSAV…LAGAEEFRRD (119 aa). Asp-67 is modified (4-aspartylphosphate). The tract at residues 146-208 is disordered; the sequence is PIPPVPTQRD…PQGRGTPRNT (63 aa). 2 stretches are compositionally biased toward low complexity: residues 166–176 and 185–199; these read AAPGAPVARSI and SAPA…AQPP. In terms of domain architecture, CheB-type methylesterase spans 205–400; it reads PRNTARPEII…PGIVRRAKGG (196 aa). Catalysis depends on residues Ser-219, His-246, and Asp-342.

Belongs to the CheB family. Phosphorylated by CheA. Phosphorylation of the N-terminal regulatory domain activates the methylesterase activity.

The protein resides in the cytoplasm. The enzyme catalyses [protein]-L-glutamate 5-O-methyl ester + H2O = L-glutamyl-[protein] + methanol + H(+). The catalysed reaction is L-glutaminyl-[protein] + H2O = L-glutamyl-[protein] + NH4(+). Involved in chemotaxis. Part of a chemotaxis signal transduction system that modulates chemotaxis in response to various stimuli. Catalyzes the demethylation of specific methylglutamate residues introduced into the chemoreceptors (methyl-accepting chemotaxis proteins or MCP) by CheR. Also mediates the irreversible deamidation of specific glutamine residues to glutamic acid. The chain is Protein-glutamate methylesterase/protein-glutamine glutaminase from Maricaulis maris (strain MCS10) (Caulobacter maris).